The chain runs to 439 residues: MSGDAQPSSNQRATEARPPPSPPLVNEKAAIGALCVVCGDRACSHLYYGVAACHGCKCFFWRTVKSRLNYVCRYGGNCSISTAGRNACRYCRFHRCLFVGMKIEAVKMDRKLTKRKKEKTDEDDTDDGGSHESFETTTDAKRAKFDNSLLISSLQLIDKTSSAGNAKLSTLHFVQPSLQNLLDEPELLDGFRSEMSYRATRQADEQLCYDSERRLVTWAIDWCRQTAEIADVHHTNDKISLLRASCAPLVLLELGCQSSFGPSDTQIPFCNNSFLSAHCIPPSTSFLRWKTIQSLNKWAQRELKPLCLRAKEIVLLKALIALNPDANGLSSDAESSIRMLRERVHTALFQLLMENSEPITAASRLAQILLLIPQLSLMGVDVIEQVKVRNTFNKRSAFGEGLLFWQLYGDIFDDANDDSYLEHSASCSPTDSQYTTDSI.

Polar residues predominate over residues 1–13; sequence MSGDAQPSSNQRA. Positions 1 to 22 are disordered; it reads MSGDAQPSSNQRATEARPPPSP. A DNA-binding region (nuclear receptor) is located at residues 32–108; sequence GALCVVCGDR…VGMKIEAVKM (77 aa). NR C4-type zinc fingers lie at residues 35-56 and 72-96; these read CVVCGDRACSHLYYGVAACHGC and CRYGGNCSISTAGRNACRYCRFHRC. The segment at 112-135 is disordered; the sequence is LTKRKKEKTDEDDTDDGGSHESFE. The region spanning 173 to 408 is the NR LBD domain; that stretch reads FVQPSLQNLL…GEGLLFWQLY (236 aa).

It belongs to the nuclear hormone receptor family.

The protein resides in the nucleus. In terms of biological role, orphan nuclear receptor. The protein is Nuclear hormone receptor family member nhr-97 (nhr-97) of Caenorhabditis elegans.